The following is a 388-amino-acid chain: Chorismate synthase (388 aa).

NADP(+)-binding residues include Arg-39 and Arg-45. FMN-binding positions include Arg-132–Ser-134, Asn-251–Ala-252, Gly-296, Lys-311–Thr-315, and Arg-337.

The protein belongs to the chorismate synthase family. In terms of assembly, homotetramer. The cofactor is FMNH2.

The catalysed reaction is 5-O-(1-carboxyvinyl)-3-phosphoshikimate = chorismate + phosphate. It functions in the pathway metabolic intermediate biosynthesis; chorismate biosynthesis; chorismate from D-erythrose 4-phosphate and phosphoenolpyruvate: step 7/7. Functionally, catalyzes the anti-1,4-elimination of the C-3 phosphate and the C-6 proR hydrogen from 5-enolpyruvylshikimate-3-phosphate (EPSP) to yield chorismate, which is the branch point compound that serves as the starting substrate for the three terminal pathways of aromatic amino acid biosynthesis. This reaction introduces a second double bond into the aromatic ring system. The chain is Chorismate synthase from Staphylococcus aureus (strain Mu50 / ATCC 700699).